The primary structure comprises 526 residues: tRNA-2-methylthio-N(6)-dimethylallyladenosine synthase (526 aa).

One can recognise an MTTase N-terminal domain in the interval 14–130 (RTYQVRTYGC…LPTLLERARH (117 aa)). The [4Fe-4S] cluster site is built by C23, C59, C93, C167, C171, and C174. The 249-residue stretch at 153–401 (RESAYAGWVS…IELQERISLE (249 aa)) folds into the Radical SAM core domain. Positions 404–483 (QAQVGRTLEL…PHHLIADGAL (80 aa)) constitute a TRAM domain.

Belongs to the methylthiotransferase family. MiaB subfamily. In terms of assembly, monomer. The cofactor is [4Fe-4S] cluster.

The protein resides in the cytoplasm. The catalysed reaction is N(6)-dimethylallyladenosine(37) in tRNA + (sulfur carrier)-SH + AH2 + 2 S-adenosyl-L-methionine = 2-methylsulfanyl-N(6)-dimethylallyladenosine(37) in tRNA + (sulfur carrier)-H + 5'-deoxyadenosine + L-methionine + A + S-adenosyl-L-homocysteine + 2 H(+). In terms of biological role, catalyzes the methylthiolation of N6-(dimethylallyl)adenosine (i(6)A), leading to the formation of 2-methylthio-N6-(dimethylallyl)adenosine (ms(2)i(6)A) at position 37 in tRNAs that read codons beginning with uridine. This Mycobacterium sp. (strain JLS) protein is tRNA-2-methylthio-N(6)-dimethylallyladenosine synthase.